Consider the following 142-residue polypeptide: Hemoglobin subunit alpha-4 (142 aa).

At Ser1 the chain carries N-acetylserine. Residues 1–142 (SLSAKDKANV…LALALAEKYR (142 aa)) enclose the Globin domain. His59 provides a ligand contact to O2. His88 is a binding site for heme b.

This sequence belongs to the globin family. Heterotetramer of two alpha chains and two beta chains. As to expression, red blood cells.

Functionally, involved in oxygen transport from gills to the various peripheral tissues. In Oncorhynchus mykiss (Rainbow trout), this protein is Hemoglobin subunit alpha-4 (hba4).